Here is a 1395-residue protein sequence, read N- to C-terminus: MKDLLKFLKQQHKSEEFDNIRIGLASPDMIRSWSFGEVKKPETINYRTFKPERDGLFCARIFGPVKDYECLCGKYKRLKHRGVICEKCGVEVTLTKVRRERMGHIELASPVAHIWFLKSLPSRIGLMLDMTLRDIERVLYFESYVVAEPGMTTLERSQLLSEEEYLDALEEHGDEFEAKMGAEAVFELLKALDVDADVAAMREELPSINSETRRKKITKRLKLLESFQLSGNKPEWMILTVLPVLPPDLRPLVPLDGGRFATSDLNDLYRRVINRNNRLKRLLDLAAPDIIVRNEKRMLQEAVDALLDNGRRGRAITGSNKRPLKSLADMIKGKQGRFRQNLLGKRVDYSGRSVITVGPTLRLHQCGLPKKMALELFKPFIYGKLEGRGLATTIKAAKKLVEREDPEVWDVLDEVIREHPVLLNRAPTLHRLGIQAFEPTLIEGKAIQLHPLVCAAYNADFDGDQMAVHVPLTIEAQLEARALMMSTNNILSPANGEPIIVPSQDVVMGLYYMTRDRVNGLGEGMMFTSPDEAEKAYRTGNAELHARVKVRITEYDVAEDGSKTEKVTLTDTTVGRAILSLVLPKGLPFELINQAMGKKMISRLLNACYRTLGLKDTVIAADQIMYTGFHYAMIAGASVGIDDMVIPDAKKDIIEGAEAEVREIQEQFQSGLVTAGERYNKVIDIWSNANEKVAKAMMENLSIETVKNRDGEMEDQASFNSVFMMADSGARGSAAQIRQLAGMRGLMAKPDGSIIETPITANFREGLNVLQYFISTHGARKGLADTALKTANSGYLTRRLVDVAQDLVINNEDCGTFEGVKMTPLIEGGDVVEPLRERVLGRTVAEDVLKPGTNEILVERNVLLDEALVDMLESNSVDQIQVRSVITCENDFGVCAKCYGRDLARGHMVGHGEAVGVIAAQSIGEPGTQLTMRTFHIGGAASRASAENSVQVKTTGTLKLQNAKFVRNTDDKVVIVSRSTEITIIDDQGREKERYKVPYGAILTTDDNATVTSGEVVANWDPHSHPIVTERQAKISFADIDDSNTEMQQDELTGLTRIVVNDLSKANAKEPKLILESDEHGLQEIRLPSFTTIEATDGMQAKPGDVLARIPQESSKTRDITGGLPRVADLFEARKPKEPAILAEVSGTIGWGKETKGKKRLVITPKDADAYEEMIPKWRQLNVFEGENVEKGEVIADGPESPHDILRLRGISAVSNYIVNEVQEVYRLQGVKINDKHIEVVIRQMLRKCMITYAGDSNFLEGEQVEVSNVKIANRELEKQGKIPAQYETQLLGITKASLSTESFISAASFQETTRVLTEAAVQGKEDELRGLKENVIVGRLIPAGTGFAYHQKRTARKLAERQAVEELSVSAADAEQALTEALNAEVMDTPSSDE.

Zn(2+)-binding residues include C70, C72, C85, and C88. The Mg(2+) site is built by D460, D462, and D464. Zn(2+) is bound by residues C814, C888, C895, and C898.

This sequence belongs to the RNA polymerase beta' chain family. As to quaternary structure, the RNAP catalytic core consists of 2 alpha, 1 beta, 1 beta' and 1 omega subunit. When a sigma factor is associated with the core the holoenzyme is formed, which can initiate transcription. Requires Mg(2+) as cofactor. It depends on Zn(2+) as a cofactor.

The catalysed reaction is RNA(n) + a ribonucleoside 5'-triphosphate = RNA(n+1) + diphosphate. DNA-dependent RNA polymerase catalyzes the transcription of DNA into RNA using the four ribonucleoside triphosphates as substrates. The chain is DNA-directed RNA polymerase subunit beta' from Pseudoalteromonas atlantica (strain T6c / ATCC BAA-1087).